The sequence spans 298 residues: MNPGYRGRFAPSPTGPLHFGSLVGALASWLDARAHGGTWLVRIEDLDGPRTVPGAADDILATLAHFGMTPDEPPIWQSTRDAAYTAALERLVAAGLVYPCGCTRKEIADSLRAAHERHTTLAYPGTCRTGLHGKPARAWRLRVPDGNDAVVTFDDRWQHAQSQNLATEVGDFVLKRADGQWAYQLAVVVDDADAGITHVVRGADLLDSTARQIYLQRCLGVPTPAYLHVPVVVDANGEKLSKQTGATALERDDPLPALRAAAAHLGLAADGDRPVHTIDAFYAAATDAWARRFGPRAG.

Residues 8-12 (RFAPS) and Glu44 contribute to the L-glutamate site. The 'HIGH' region signature appears at 11–21 (PSPTGPLHFGS). Zn(2+)-binding residues include Cys100, Cys102, Tyr123, and Cys127. L-glutamate-binding residues include Tyr183 and Arg201. The 'KMSKS' region signature appears at 239-243 (KLSKQ). Lys242 serves as a coordination point for ATP.

Belongs to the class-I aminoacyl-tRNA synthetase family. GluQ subfamily. Zn(2+) is required as a cofactor.

Catalyzes the tRNA-independent activation of glutamate in presence of ATP and the subsequent transfer of glutamate onto a tRNA(Asp). Glutamate is transferred on the 2-amino-5-(4,5-dihydroxy-2-cyclopenten-1-yl) moiety of the queuosine in the wobble position of the QUC anticodon. This Burkholderia cenocepacia (strain ATCC BAA-245 / DSM 16553 / LMG 16656 / NCTC 13227 / J2315 / CF5610) (Burkholderia cepacia (strain J2315)) protein is Glutamyl-Q tRNA(Asp) synthetase.